Consider the following 272-residue polypeptide: Tumor necrosis factor receptor superfamily member 4 (272 aa).

The N-terminal stretch at 1-19 is a signal peptide; sequence MYVWVQQPTALLLLALTLG. At 20-211 the chain is on the extracellular side; sequence VTARRLNCVK…PPTLVTPEGP (192 aa). 2 TNFR-Cys repeats span residues 26–61 and 62–103; these read NCVK…TLCH and PCET…DTVC. 8 cysteine pairs are disulfide-bonded: cysteine 27–cysteine 38, cysteine 39–cysteine 52, cysteine 42–cysteine 60, cysteine 63–cysteine 77, cysteine 80–cysteine 95, cysteine 83–cysteine 103, cysteine 105–cysteine 123, and cysteine 126–cysteine 139. A TNFR-Cys 3; truncated repeat occupies 104–124; sequence RCRPGTQPRQDSGYKLGVDCV. A TNFR-Cys 4 repeat occupies 125-165; the sequence is PCPPGHFSPGNNQACKPWTNCTLSGKQTRHPASDSLDAVCE. A glycan (N-linked (GlcNAc...) asparagine) is linked at asparagine 144. Cysteine 145 and cysteine 164 form a disulfide bridge. A helical transmembrane segment spans residues 212-236; that stretch reads AFAVLLGLGLGLLAPLTVLLALYLL. Residues 237–272 are Cytoplasmic-facing; that stretch reads RKAWRLPNTPKPCWGNSFRTPIQEEHTDAHFTLAKI.

As to quaternary structure, interacts with TRAF2, TRAF3 and TRAF5. Expressed in CD4(+) T-cells and in T-helper Th17 cells (at protein level).

It is found in the membrane. Its function is as follows. Receptor for TNFSF4/OX40L/GP34. Is a costimulatory molecule implicated in long-term T-cell immunity. The protein is Tumor necrosis factor receptor superfamily member 4 (Tnfrsf4) of Mus musculus (Mouse).